We begin with the raw amino-acid sequence, 96 residues long: MKLKIVAVVVTGLLAANVAHAAEVYNKDGNKLDLYGKVTALRYFTDDKRDDGDKTYARLGFKGETQINDQMIGFGHWEYDFKGYNDEANGSRGKNL.

The N-terminal stretch at 1-21 is a signal peptide; sequence MKLKIVAVVVTGLLAANVAHA.

In Escherichia coli (strain K12), this protein is Protein YddL (yddL).